A 962-amino-acid polypeptide reads, in one-letter code: MDTMRISGVSTGAEVLIQCNSLSSLVSRRCDDGKWRTRMFPARNRDLRPSPTRRSFLSVKSISSEPKAKVTDAVLDSEQEVFISSMNPFAPDAASVASSIKYHAEFTPLFSPEKFELPKAFFATAQSVRDALIMNWNATYEYYNRVNVKQAYYLSMEFLQGRALSNAVGNLGLNSAYGDALKRLGFDLESVASQEPDPALGNGGLGRLASCFLDSMATLNYPAWGYGLRYKYGLFKQRITKDGQEEAAEDWLELSNPWEIVRNDVSYPIKFYGKVVFGSDGKKRWIGGEDIVAVAYDVPIPGYKTKTTINLRLWSTKAPSEDFDLSSYNSGKHTEAAEALFNAEKICFVLYPGDESTEGKALRLKQQYTLCSASLQDIVARFETRSGGNVNWEEFPEKVAVQMNDTHPTLCIPELMRILMDLKGLSWEDAWKITQRTVAYTNHTVLPEALEKWSLELMEKLLPRHVEIIEKIDEELVRTIVSEYGTADPDLLEEKLKAMRILENVELPSAFADVIVKPVNKPVTAKDAQNGVKTEQEEEKTAGEEEEDEVIPEPTVEPPKMVRMANLAVVGGHAVNGVAEIHSEIVKQDVFNDFVQLWPEKFQNKTNGVTPRRWIRFCNPYLSDIITNWIGTEDWVLNTEKVAELRKFADNEDLQSEWRAAKKKNKLKVVSLIKERTGYTVSPDAMFDIQIKRIHEYKRQLLNILGIVYRYKKMKEMSASEREKAFVPRVCIFGGKAFATYVQAKRIVKFITDVASTINHDPEIGDLLKVIFVPDYNVSVAELLIPASELSQHISTAGMEASGTSNMKFSMNGCVLIGTLDGANVEIREEVGEENFFLFGAKADQIVNLRKERAEGKFVPDPTFEEVKKFVGSGVFGSNSYDELIGSLEGNEGFGRADYFLVGKDFPSYIECQEKVDEAYRDQKRWTRMSIMNTAGSFKFSSDRTIHEYAKDIWNIKQVELP.

Residues M1–S63 constitute a chloroplast transit peptide. The interval A525–P552 is disordered. K808 bears the N6-(pyridoxal phosphate)lysine mark.

It belongs to the glycogen phosphorylase family. Requires pyridoxal 5'-phosphate as cofactor.

It localises to the plastid. Its subcellular location is the chloroplast stroma. The enzyme catalyses [(1-&gt;4)-alpha-D-glucosyl](n) + phosphate = [(1-&gt;4)-alpha-D-glucosyl](n-1) + alpha-D-glucose 1-phosphate. Phosphorylase is an important allosteric enzyme in carbohydrate metabolism. Enzymes from different sources differ in their regulatory mechanisms and in their natural substrates. However, all known phosphorylases share catalytic and structural properties. May be not required for the degradation of starch, but the phosphorolysis of starch may play an important role in water stress tolerance. The sequence is that of Alpha-glucan phosphorylase 1 (PHS1) from Arabidopsis thaliana (Mouse-ear cress).